The primary structure comprises 224 residues: Uracil-DNA glycosylase 2 (224 aa).

The active-site Proton acceptor is D64.

It belongs to the uracil-DNA glycosylase (UDG) superfamily. UNG family.

Its subcellular location is the cytoplasm. The catalysed reaction is Hydrolyzes single-stranded DNA or mismatched double-stranded DNA and polynucleotides, releasing free uracil.. Its function is as follows. Excises uracil residues from the DNA which can arise as a result of misincorporation of dUMP residues by DNA polymerase or due to deamination of cytosine. This Listeria monocytogenes serovar 1/2a (strain ATCC BAA-679 / EGD-e) protein is Uracil-DNA glycosylase 2.